A 496-amino-acid polypeptide reads, in one-letter code: Cytochrome P450 71AV8 (496 aa).

The helical transmembrane segment at 3 to 23 (ISIPTTLGLAVIIFIIFKLLT) threads the bilayer. Residue Cys432 coordinates heme.

This sequence belongs to the cytochrome P450 family. It depends on heme as a cofactor.

It is found in the membrane. Its function is as follows. Valencene oxidase, which preferentially hydroylates the C2 position of (+)-valencene in the trans-orientation, producing trans-nootkatol that can be further oxidized to (+)-nootkatone. Can also catalyze the three-step conversion of germacrene A to germacra-1(10),4,11(13)-trien-12-oic acid and the partial conversion of the non-natural substrate amorpha-4,11-diene into artemisinic alcohol and artemisinic aldehyde. In Cichorium intybus (Chicory), this protein is Cytochrome P450 71AV8 (CYP71AV8).